The chain runs to 918 residues: Protein SEY1 homolog (918 aa).

The Cytoplasmic segment spans residues 1–701; the sequence is MESSNHLPNK…AGTSVSSWRN (701 aa). The region spanning 46-280 is the GB1/RHD3-type G domain; it reads GFKFNVVTIL…VPSDGFFVYS (235 aa). 56–63 is a binding site for GTP; sequence GSQSSGKS. Positions 554 to 626 form a coiled coil; it reads SLVLLLKATQ…DALTLLQVLK (73 aa). Residues 702-722 traverse the membrane as a helical segment; sequence IPPVFWLVLLVLGWNELRAAF. Topologically, residues 723-725 are lumenal; that stretch reads RVL. Residues 726-746 traverse the membrane as a helical segment; sequence LKFYILIPLLIVSYFTFSYSA. Residues 747–918 are Cytoplasmic-facing; that stretch reads NKLLGPKANE…CGKAVHLAQW (172 aa).

Belongs to the TRAFAC class dynamin-like GTPase superfamily. GB1/RHD3 GTPase family. RHD3 subfamily.

It is found in the endoplasmic reticulum membrane. Probable GTP-binding protein that may be involved in cell development. The protein is Protein SEY1 homolog of Theileria annulata.